Here is a 150-residue protein sequence, read N- to C-terminus: Cilia- and flagella-associated protein 68 (150 aa).

2 mn regions span residues 99–110 (TTYDTSYNNKMP) and 140–150 (KSTYMNSYSKP).

This sequence belongs to the CFAP68 family. Microtubule inner protein component of sperm flagellar doublet microtubules.

It is found in the cytoplasm. It localises to the cytoskeleton. Its subcellular location is the cilium axoneme. The protein resides in the flagellum axoneme. The protein localises to the nucleus. It is found in the cell projection. It localises to the cilium. In terms of biological role, microtubule inner protein (MIP) part of the dynein-decorated doublet microtubules (DMTs) in cilia axoneme, which is required for motile cilia beating. This Homo sapiens (Human) protein is Cilia- and flagella-associated protein 68.